A 337-amino-acid polypeptide reads, in one-letter code: tRNA N6-adenosine threonylcarbamoyltransferase (337 aa).

His-111 and His-115 together coordinate Fe cation. Substrate contacts are provided by residues 134–138, Asp-167, Gly-180, and Asn-272; that span reads LVSGG. Asp-300 is a Fe cation binding site.

This sequence belongs to the KAE1 / TsaD family. It depends on Fe(2+) as a cofactor.

The protein localises to the cytoplasm. It catalyses the reaction L-threonylcarbamoyladenylate + adenosine(37) in tRNA = N(6)-L-threonylcarbamoyladenosine(37) in tRNA + AMP + H(+). Functionally, required for the formation of a threonylcarbamoyl group on adenosine at position 37 (t(6)A37) in tRNAs that read codons beginning with adenine. Is involved in the transfer of the threonylcarbamoyl moiety of threonylcarbamoyl-AMP (TC-AMP) to the N6 group of A37, together with TsaE and TsaB. TsaD likely plays a direct catalytic role in this reaction. The sequence is that of tRNA N6-adenosine threonylcarbamoyltransferase from Salmonella arizonae (strain ATCC BAA-731 / CDC346-86 / RSK2980).